The primary structure comprises 118 residues: Ly-6/neurotoxin-like protein 1 (118 aa).

Positions 1 to 22 (MTPLLTLFLVVLMGLPLAPVQA) are cleaved as a signal peptide. A UPAR/Ly6 domain is found at 23-107 (LDCHVCAYNG…LAIPATLALA (85 aa)). Intrachain disulfides connect C25/C48, C28/C35, C41/C66, C70/C87, and C88/C93. S95 carries GPI-anchor amidated serine lipidation. The propeptide at 96–118 (AGLAIPATLALAPVLLATLWGLL) is removed in mature form.

Interacts with nAChRs containing alpha-4:beta-2 (CHRNA4:CHRNB2) and alpha-7 (CHRNA7) subunits. Interacts with CHRNA4 probably in the endoplasmic reticulum prior to nAChR pentameric assembly. Interacts with KCNA2/Potassium voltage-gated channel subfamily A member 2. As to expression, expressed in lung predominantly in airway epithelial cells, submucous glands, and smooth muscle cells, in endothelial and smooth muscle cells in vessel walls and in alveolar type II cells (at protein level). Also expressed in brain.

It is found in the cell membrane. The protein resides in the cell projection. It localises to the dendrite. Its subcellular location is the endoplasmic reticulum. Acts in different tissues through interaction to nicotinic acetylcholine receptors (nAChRs). The proposed role as modulator of nAChR activity seems to be dependent on the nAChR subtype and stoichiometry, and to involve an effect on nAChR trafficking and its cell surface expression, and on single channel properties of the nAChR inserted in the plasma membrane. Modulates functional properties of nicotinic acetylcholine receptors (nAChRs) to prevent excessive excitation, and hence neurodegeneration. Enhances desensitization by increasing both the rate and extent of desensitization of alpha-4:beta-2-containing nAChRs and slowing recovery from desensitization. Promotes large amplitude ACh-evoked currents through alpha-4:beta-2 nAChRs. Is involved in regulation of the nAChR pentameric assembly in the endoplasmic reticulum. Shifts stoichiometry from high sensitivity alpha-4(2):beta-2(3) to low sensitivity alpha-4(3):beta-2(2) nAChR. In vitro modulates alpha-3:beta-4-containing nAChRs. Reduces cell surface expression of (alpha-3:beta-4)(2):beta-4 and (alpha-3:beta-4)(2):alpha-5 nAChRs suggesting an interaction with nAChR alpha-3(-):(+)beta-4 subunit interfaces and an allosteric mode. Corresponding single channel effects characterized by decreased unitary conductance, altered burst proportions and enhanced desensitization/inactivation seem to depend on nAChR alpha:alpha subunit interfaces and are greater in (alpha-3:beta-2)(2):alpha-3 when compared to (alpha-3:beta-2)(2):alpha-5 nAChRs. Prevents plasticity in the primary visual cortex late in life. The protein is Ly-6/neurotoxin-like protein 1 of Macaca mulatta (Rhesus macaque).